The following is a 215-amino-acid chain: Pyrrolidone-carboxylate peptidase (215 aa).

Catalysis depends on residues E78, C141, and H165.

This sequence belongs to the peptidase C15 family. Homotetramer.

The protein resides in the cytoplasm. The enzyme catalyses Release of an N-terminal pyroglutamyl group from a polypeptide, the second amino acid generally not being Pro.. In terms of biological role, removes 5-oxoproline from various penultimate amino acid residues except L-proline. This chain is Pyrrolidone-carboxylate peptidase, found in Streptococcus suis (strain 98HAH33).